We begin with the raw amino-acid sequence, 432 residues long: Peptidase B (432 aa).

Lys196 and Asp201 together coordinate Mn(2+). Lys208 is an active-site residue. 3 residues coordinate Mn(2+): Asp219, Asp278, and Glu280. Residue Arg282 is part of the active site.

Belongs to the peptidase M17 family. In terms of assembly, homohexamer. Requires Mn(2+) as cofactor.

It is found in the cytoplasm. The enzyme catalyses Release of an N-terminal amino acid, Xaa, from a peptide or arylamide. Xaa is preferably Glu or Asp but may be other amino acids, including Leu, Met, His, Cys and Gln.. In terms of biological role, probably plays an important role in intracellular peptide degradation. This Vibrio vulnificus (strain CMCP6) protein is Peptidase B.